Consider the following 138-residue polypeptide: SPbeta prophage-derived uncharacterized protein YopJ (138 aa).

The sequence is that of SPbeta prophage-derived uncharacterized protein YopJ (yopJ) from Bacillus subtilis (strain 168).